A 417-amino-acid polypeptide reads, in one-letter code: Brevican core protein (417 aa).

The signal sequence occupies residues 1-22 (MAPLFLPLLIALALAPGPTASA). An Ig-like V-type domain is found at 23–155 (DVLEGDSSED…SSDAVEVKVK (133 aa)). 3 cysteine pairs are disulfide-bonded: Cys-57–Cys-137, Cys-179–Cys-250, and Cys-203–Cys-224. A glycan (N-linked (GlcNAc...) asparagine) is linked at Asn-130. Link domains are found at residues 157 to 252 (VVFL…YCYA) and 257 to 354 (GELF…YCFR). Asn-267 carries N-linked (GlcNAc...) asparagine glycosylation. Intrachain disulfides connect Cys-277–Cys-352 and Cys-301–Cys-322. The N-linked (GlcNAc...) asparagine glycan is linked to Asn-337.

Belongs to the aggrecan/versican proteoglycan family. As to expression, central nervous system.

The protein localises to the secreted. It is found in the extracellular space. Its subcellular location is the extracellular matrix. In terms of biological role, may play a role in the terminally differentiating and the adult nervous system during postnatal development. Could stabilize interactions between hyaluronan (HA) and brain proteoglycans. The chain is Brevican core protein (BCAN) from Felis catus (Cat).